The sequence spans 275 residues: Large ribosomal subunit protein uL2cz/uL2cy (275 aa).

Disordered regions lie at residues Met1 to Asn26 and Met224 to Lys275. A compositionally biased stretch (polar residues) spans Lys7–Asn26.

Belongs to the universal ribosomal protein uL2 family. Part of the 50S ribosomal subunit.

It localises to the plastid. The protein localises to the chloroplast. This Phaseolus angularis (Azuki bean) protein is Large ribosomal subunit protein uL2cz/uL2cy (rpl2-A).